A 345-amino-acid chain; its full sequence is Viral Fc-gamma receptor-like protein UL119 (345 aa).

Positions 1–23 (MCSVLAIALVVALLGDMHPGVKS) are cleaved as a signal peptide. Residues 23 to 42 (SSTTSAVTSPSNTTVTSTTS) are disordered. Residues 24–294 (STTSAVTSPS…KSDPLFEDRL (271 aa)) are Virion surface-facing. N-linked (GlcNAc...) asparagine; by host glycans are attached at residues Asn-34, Asn-48, Asn-95, Asn-104, Asn-148, Asn-179, Asn-198, Asn-217, Asn-225, Asn-241, Asn-244, and Asn-260. Positions 91 to 190 (QVSLNATCKV…TWDLFTYPIY (100 aa)) constitute an Ig-like V-type domain. The chain crosses the membrane as a helical span at residues 295–317 (LAYGVLAFLVFMVIILLYVTYML). Over 318–345 (ARRRDWSYKRLEEPVEEKKHPVPYFKQW) the chain is Intravirion.

It is found in the virion membrane. Its function is as follows. Serves as a receptor for the Fc part of human IgG. May thus be involved in interfering with host Ig-mediated immune responses. The polypeptide is Viral Fc-gamma receptor-like protein UL119 (UL119/UL118) (Human cytomegalovirus (strain AD169) (HHV-5)).